Reading from the N-terminus, the 285-residue chain is Iodotyrosine deiodinase 1 (285 aa).

Residues 1–21 form a helical membrane-spanning segment; that stretch reads MFLLTPVLVAVVCILVVWVFK. Residues 96–100 and 124–125 each bind FMN; these read RRSVR and SG. 3,5-diiodo-L-tyrosine-binding residues include alanine 126, glutamate 153, tyrosine 157, and lysine 178. Alanine 126, glutamate 153, tyrosine 157, and lysine 178 together coordinate 3-iodo-L-tyrosine. FMN is bound by residues 233-235 and arginine 275; that span reads TTT.

It belongs to the nitroreductase family. In terms of assembly, homodimer. FMN is required as a cofactor.

The protein localises to the cell membrane. The protein resides in the cytoplasmic vesicle membrane. It catalyses the reaction 2 iodide + L-tyrosine + 2 NADP(+) = 3,5-diiodo-L-tyrosine + 2 NADPH + H(+). The enzyme catalyses iodide + L-tyrosine + NADP(+) = 3-iodo-L-tyrosine + NADPH. The catalysed reaction is 3-iodo-L-tyrosine + iodide + NADP(+) = 3,5-diiodo-L-tyrosine + NADPH + H(+). It carries out the reaction L-tyrosine + chloride + NADP(+) = 3-chloro-L-tyrosine + NADPH. It catalyses the reaction bromide + L-tyrosine + NADP(+) = 3-bromo-L-tyrosine + NADPH. Catalyzes the dehalogenation of halotyrosines such as 3-bromo-L-tyrosine, 3-chloro-L-tyrosine, 3-iodo-L-tyrosine and 3,5-diiodo-L-tyrosine. During thyroid hormone biosynthesis, facilitates iodide salvage by catalysing the oxidative NADPH-dependent deiodination of the halogenated by-products of thyroid hormone production, monoiodotyrosine (L-MIT) and diiodotyrosine (L-DIT). The scavanged iodide can then reenter the hormone-producing pathways. Acts more efficiently on 3-iodo-L-tyrosine than 3,5-diiodo-L-tyrosine. The polypeptide is Iodotyrosine deiodinase 1 (Iyd) (Mus musculus (Mouse)).